The following is a 56-amino-acid chain: Large ribosomal subunit protein bL32c (56 aa).

It belongs to the bacterial ribosomal protein bL32 family.

The protein localises to the plastid. Its subcellular location is the chloroplast. The chain is Large ribosomal subunit protein bL32c from Tupiella akineta (Green alga).